The sequence spans 684 residues: Sec1 family domain-containing protein 2 (684 aa).

It belongs to the STXBP/unc-18/SEC1 family.

May be involved in protein transport. The polypeptide is Sec1 family domain-containing protein 2 (Scfd2) (Mus musculus (Mouse)).